A 1342-amino-acid polypeptide reads, in one-letter code: DNA-directed RNA polymerase subunit beta (1342 aa).

This sequence belongs to the RNA polymerase beta chain family. In terms of assembly, the RNAP catalytic core consists of 2 alpha, 1 beta, 1 beta' and 1 omega subunit. When a sigma factor is associated with the core the holoenzyme is formed, which can initiate transcription.

It carries out the reaction RNA(n) + a ribonucleoside 5'-triphosphate = RNA(n+1) + diphosphate. Functionally, DNA-dependent RNA polymerase catalyzes the transcription of DNA into RNA using the four ribonucleoside triphosphates as substrates. In Histophilus somni (strain 129Pt) (Haemophilus somnus), this protein is DNA-directed RNA polymerase subunit beta.